The primary structure comprises 169 residues: Disulfide bond formation protein B 1 (169 aa).

The Cytoplasmic segment spans residues 1 to 14 (MSDDRLGLGRERRF). Residues 15 to 31 (LVLLGIICLALIGGALY) form a helical membrane-spanning segment. At 32–49 (MQVVLGEAPCPLCILQRY) the chain is on the periplasmic side. Cys-41 and Cys-44 are disulfide-bonded. A helical transmembrane segment spans residues 50 to 64 (ALLLIALFAFIGAAM). The Cytoplasmic portion of the chain corresponds to 65–71 (SSRRGVT). A helical transmembrane segment spans residues 72–89 (VMETLVVICALAGAGVAG). The Periplasmic portion of the chain corresponds to 90–144 (HHVYTQFYPSVSCGIDVLQPIVDSLPLAKIFPLGFQVDGFCSTPYPPILGLSLAQ). A disulfide bridge links Cys-102 with Cys-130. A helical transmembrane segment spans residues 145–163 (WALVAFVLTVILVPLGVVR). The Cytoplasmic portion of the chain corresponds to 164–169 (NRKKTY).

This sequence belongs to the DsbB family.

Its subcellular location is the cell inner membrane. Functionally, required for disulfide bond formation in some periplasmic proteins. Acts by oxidizing the DsbA protein. The protein is Disulfide bond formation protein B 1 of Pseudomonas fluorescens (strain ATCC BAA-477 / NRRL B-23932 / Pf-5).